The sequence spans 378 residues: Protein KlaB (378 aa).

This sequence belongs to the TelA family.

Functionally, belongs to the kla operon, which is associated with cryptic tellurite resistance, and IncW plasmid fertility inhibition. The chain is Protein KlaB (klaB) from Escherichia coli.